Here is a 781-residue protein sequence, read N- to C-terminus: MTKSYMPLFRSPRQFKKIYFILIPLILAVIILHVFFDGFNKISEYSPTFISNRILNHQDQQQKSEKSSDVISSYFPSLAIYPKNFDNRVEFVNEPKNSKWIQYFGDSKTVLSNYITNQTYTNHSIGLYSSSTVRPPASSCKDILYERSFEITKYRTLHDDLYKLATTLLYQLENDPAFQDLSPFFNDRLPHIIMRGELHKHIYKFAGTSVWLEQHGVHLMLSRVIYSQQGKKNDPQLSLLYAQVYDENWNELNDIELIVPVINPNGERVYDSVKYPQFLAIPFYHNSEYIKSRWYGPEDTRLILTKNKFGDDEPVIIFNSYHRQIKDMSTEDDNNVHTKFEFYRSMFVGWLFQYQLGKLNTDGIQDSKFNNVTFNKVKELRIEGKERTSIEKNWTPFIDPDERNQISYYGNHNLGDNYVYIVYQWNHLKILKCELDNFIDSSHSTCTMFFKDVETTQEVGPVRGGTELWPIKIDNNNNNNNLNEDDLSTKQEPQQQRQLWIGFLRAHVKDCGCGGSMYRPNFLILEKLNSKFKLTYLSGSINFNVSVYGWANYDVVCAGHEANALIPNGISMFDQDDDYLTLSMSVADQDNTLVHIHGVKKLIYSLDHDWNGILKENKQIECVVNNANDFCKAYADEHYKLGDSEAAIKEVKQKAKEEAEKAKAEKEKAEKEKAEKEKAEKEKEEKEKEEKEEKEKAEKEKEEKEKAEKELAEKELAEQKDEDAKDEDKNEDEDDKEKNDESGLTEKSEVEENGENTNEGGEDDGDGDGEEEKEDDDDIEV.

Residues 1-17 lie on the Cytoplasmic side of the membrane; sequence MTKSYMPLFRSPRQFKK. A helical membrane pass occupies residues 18–38; sequence IYFILIPLILAVIILHVFFDG. At 39 to 781 the chain is on the extracellular side; that stretch reads FNKISEYSPT…EKEDDDDIEV (743 aa). Residues 640-733 are a coiled coil; that stretch reads KLGDSEAAIK…AKDEDKNEDE (94 aa). Composition is skewed to basic and acidic residues over residues 663–728 and 736–750; these read KAEK…KDED and KEKN…KSEV. The tract at residues 663-781 is disordered; sequence KAEKEKAEKE…EKEDDDDIEV (119 aa). Acidic residues predominate over residues 751–781; that stretch reads EENGENTNEGGEDDGDGDGEEEKEDDDDIEV.

It belongs to the BMT family.

Its subcellular location is the membrane. Beta-mannosyltransferase involved in cell wall biosynthesis. Required for the elongation of beta-mannose chains on the acid-labile fraction of cell wall phosphopeptidomannan. This chain is Beta-mannosyltransferase 4 (BMT4), found in Candida albicans (strain SC5314 / ATCC MYA-2876) (Yeast).